Here is a 427-residue protein sequence, read N- to C-terminus: Gamma-glutamyl phosphate reductase (427 aa).

It belongs to the gamma-glutamyl phosphate reductase family.

Its subcellular location is the cytoplasm. It carries out the reaction L-glutamate 5-semialdehyde + phosphate + NADP(+) = L-glutamyl 5-phosphate + NADPH + H(+). The protein operates within amino-acid biosynthesis; L-proline biosynthesis; L-glutamate 5-semialdehyde from L-glutamate: step 2/2. Its function is as follows. Catalyzes the NADPH-dependent reduction of L-glutamate 5-phosphate into L-glutamate 5-semialdehyde and phosphate. The product spontaneously undergoes cyclization to form 1-pyrroline-5-carboxylate. In Brucella melitensis biotype 2 (strain ATCC 23457), this protein is Gamma-glutamyl phosphate reductase.